The chain runs to 91 residues: Long neurotoxin OH-56 (91 aa).

A signal peptide spans 1–21; sequence MKTLLLTLVVVTIMCLDLGYT. 5 cysteine pairs are disulfide-bonded: Cys-24/Cys-42, Cys-35/Cys-63, Cys-48/Cys-52, Cys-67/Cys-78, and Cys-79/Cys-84.

This sequence belongs to the three-finger toxin family. Long-chain subfamily. Type II alpha-neurotoxin sub-subfamily. In terms of tissue distribution, expressed by the venom gland.

The protein resides in the secreted. Functionally, binds with high affinity to muscular (alpha-1/CHRNA1) and neuronal (alpha-7/CHRNA7) nicotinic acetylcholine receptor (nAChR) and inhibits acetylcholine from binding to the receptor, thereby impairing neuromuscular and neuronal transmission. This chain is Long neurotoxin OH-56, found in Ophiophagus hannah (King cobra).